We begin with the raw amino-acid sequence, 240 residues long: Probable xyloglucan-specific endo-beta-1,4-glucanase A (240 aa).

The N-terminal stretch at Met-1 to Ala-15 is a signal peptide.

It belongs to the glycosyl hydrolase 12 (cellulase H) family.

It localises to the secreted. It carries out the reaction xyloglucan + H2O = xyloglucan oligosaccharides.. In terms of biological role, catalyzes endohydrolysis of 1,4-beta-D-glucosidic linkages in xyloglucan with retention of the beta-configuration of the glycosyl residues. Specific for xyloglucan and does not hydrolyze other cell wall components. In Aspergillus oryzae (strain ATCC 42149 / RIB 40) (Yellow koji mold), this protein is Probable xyloglucan-specific endo-beta-1,4-glucanase A (xgeA).